The chain runs to 182 residues: Putative manganese efflux pump MntP (182 aa).

6 consecutive transmembrane segments (helical) span residues 6–26 (LIPL…VSLG), 37–57 (ILYI…IGMV), 71–91 (HFAG…STIL), 101–121 (IGIS…SVGL), 131–151 (IITI…GLLI), and 162–182 (YGEI…LFPI).

The protein belongs to the MntP (TC 9.B.29) family.

The protein resides in the cell membrane. Its function is as follows. Probably functions as a manganese efflux pump. This Bacillus cereus (strain B4264) protein is Putative manganese efflux pump MntP.